The chain runs to 161 residues: MTDQQNTAASEEETAPQFSLQRIYVRDLSFEAPKSPAIFRQQWDPAVALDLNTRQKALEGDFYEVVLTLSVTVKNGEEVAFIAEVQQAGIFLIKNLDAASMSHTLGAFCPNILFPYARETLDSLVTRGSFPALMLAPVNFDALYAQELQRMQESGETPTVQ.

This sequence belongs to the SecB family. In terms of assembly, homotetramer, a dimer of dimers. One homotetramer interacts with 1 SecA dimer.

The protein resides in the cytoplasm. One of the proteins required for the normal export of preproteins out of the cell cytoplasm. It is a molecular chaperone that binds to a subset of precursor proteins, maintaining them in a translocation-competent state. It also specifically binds to its receptor SecA. This is Protein-export protein SecB from Pseudomonas fluorescens (strain Pf0-1).